Reading from the N-terminus, the 408-residue chain is Argininosuccinate synthase (408 aa).

Residues 10–18 (AYSGGLDTS) and alanine 37 each bind ATP. The L-citrulline site is built by tyrosine 90 and serine 95. Glycine 120 provides a ligand contact to ATP. L-aspartate is bound by residues threonine 122, asparagine 126, and aspartate 127. Asparagine 126 provides a ligand contact to L-citrulline. Residues arginine 130, serine 182, serine 191, glutamate 267, and tyrosine 279 each contribute to the L-citrulline site.

The protein belongs to the argininosuccinate synthase family. Type 1 subfamily. In terms of assembly, homotetramer.

Its subcellular location is the cytoplasm. The catalysed reaction is L-citrulline + L-aspartate + ATP = 2-(N(omega)-L-arginino)succinate + AMP + diphosphate + H(+). It participates in amino-acid biosynthesis; L-arginine biosynthesis; L-arginine from L-ornithine and carbamoyl phosphate: step 2/3. The chain is Argininosuccinate synthase from Paraburkholderia xenovorans (strain LB400).